Here is a 167-residue protein sequence, read N- to C-terminus: Phosphopantetheine adenylyltransferase (167 aa).

Position 9 (Thr-9) interacts with substrate. ATP contacts are provided by residues 9–10 and His-17; that span reads TF. 3 residues coordinate substrate: Lys-41, Leu-73, and Arg-87. ATP contacts are provided by residues 88 to 90, Glu-98, and 123 to 129; these read GLR and YQFISGT.

This sequence belongs to the bacterial CoaD family. Homohexamer. Requires Mg(2+) as cofactor.

It localises to the cytoplasm. The catalysed reaction is (R)-4'-phosphopantetheine + ATP + H(+) = 3'-dephospho-CoA + diphosphate. Its pathway is cofactor biosynthesis; coenzyme A biosynthesis; CoA from (R)-pantothenate: step 4/5. Functionally, reversibly transfers an adenylyl group from ATP to 4'-phosphopantetheine, yielding dephospho-CoA (dPCoA) and pyrophosphate. In Ralstonia pickettii (strain 12J), this protein is Phosphopantetheine adenylyltransferase.